The following is a 133-amino-acid chain: Small ribosomal subunit protein eS17 (133 aa).

This sequence belongs to the eukaryotic ribosomal protein eS17 family.

In Spodoptera frugiperda (Fall armyworm), this protein is Small ribosomal subunit protein eS17 (RpS17).